Reading from the N-terminus, the 343-residue chain is Phenylalanine--tRNA ligase alpha subunit (343 aa).

Glutamate 264 is a Mg(2+) binding site.

The protein belongs to the class-II aminoacyl-tRNA synthetase family. Phe-tRNA synthetase alpha subunit type 1 subfamily. In terms of assembly, tetramer of two alpha and two beta subunits. Mg(2+) serves as cofactor.

Its subcellular location is the cytoplasm. It carries out the reaction tRNA(Phe) + L-phenylalanine + ATP = L-phenylalanyl-tRNA(Phe) + AMP + diphosphate + H(+). The protein is Phenylalanine--tRNA ligase alpha subunit of Azoarcus sp. (strain BH72).